A 167-amino-acid chain; its full sequence is Protein FAM163B (167 aa).

The helical transmembrane segment at 6-26 (VVITGGILATVILLCIIAVLC) threads the bilayer. Phosphoserine is present on Ser-40.

This sequence belongs to the FAM163 family.

Its subcellular location is the membrane. The protein is Protein FAM163B (Fam163b) of Mus musculus (Mouse).